The sequence spans 268 residues: MAKVPDLFEDLKNCYSENEEYGSEIDHLSLNQKSFYDASHEPLHEDCMDKLMSLSTSETSKTSKLTFKESVVMVASNGKILKKRRLSLNQFITDDDLEAIANDTEEEIIKPRSVPYNLQSNVKYNYMRIVNHQCILNDALNRSIIRDPSGQYLMAAVLNNLDNAVKFDMGAYTSEEDSQLPVTLRISKTQLFVSAQNEDEPVLLKEMPETPKIIKDETNLLFFWEKHGSMDYFKSVAHPKLFIATKQEKLVHMASGPPSITDFQILEK.

Residues 1–112 (MAKVPDLFED…DTEEEIIKPR (112 aa)) constitute a propeptide that is removed on maturation. Lysine 82 carries the N6-acetyllysine modification. The tract at residues 82–86 (KKRRL) is nuclear localization signal (NLS). Serine 87 is modified (phosphoserine). N-linked (GlcNAc...) asparagine glycosylation is found at asparagine 102 and asparagine 141.

The protein belongs to the IL-1 family. Monomer. Interacts with TMED10; the interaction mediates the translocation from the cytoplasm into the ERGIC (endoplasmic reticulum-Golgi intermediate compartment) and thereby secretion. Interacts with IL1R1. Interacts with S100A13; this interaction is the first step in the export of IL1A, followed by direct translocation of this complex across the plasma membrane. Acetylated within its nuclear localization sequence, which impacts subcellular localization. In terms of processing, proteolytic processed by CAPN1 in a calcium-dependent manner. Cleavage from 31 kDa precursor to 18 kDa biologically active molecules. Post-translationally, phosphorylated. Phosphorylation greatly enhances susceptibility to digestion and promotes the conversion of pre-IL1A alpha to the biologically active IL1A.

The protein resides in the nucleus. Its subcellular location is the cytoplasm. The protein localises to the secreted. Cytokine constitutively present intracellularly in nearly all resting non-hematopoietic cells that plays an important role in inflammation and bridges the innate and adaptive immune systems. After binding to its receptor IL1R1 together with its accessory protein IL1RAP, forms the high affinity interleukin-1 receptor complex. Signaling involves the recruitment of adapter molecules such as MYD88, IRAK1 or IRAK4. In turn, mediates the activation of NF-kappa-B and the three MAPK pathways p38, p42/p44 and JNK pathways. Within the cell, acts as an alarmin and cell death results in its liberation in the extracellular space after disruption of the cell membrane to induce inflammation and alert the host to injury or damage. In addition to its role as a danger signal, which occurs when the cytokine is passively released by cell necrosis, directly senses DNA damage and acts as signal for genotoxic stress without loss of cell integrity. This chain is Interleukin-1 alpha (IL1A), found in Lama glama (Llama).